A 364-amino-acid chain; its full sequence is Thebaine 6-O-demethylase (364 aa).

The Fe2OG dioxygenase domain occupies 214–314; the sequence is GTQAMRMNYY…RLSIATFHDP (101 aa). A 2-oxoglutarate-binding site is contributed by Y223. Positions 238, 240, and 295 each coordinate Fe cation. Residues R305 and S307 each contribute to the 2-oxoglutarate site.

It belongs to the iron/ascorbate-dependent oxidoreductase family. It depends on L-ascorbate as a cofactor. Requires Fe cation as cofactor. Mainly expressed in stems and leaves and, to a lower extent, in capsules and roots.

The catalysed reaction is thebaine + 2-oxoglutarate + O2 = neopinone + formaldehyde + succinate + CO2. It catalyses the reaction oripavine + 2-oxoglutarate + O2 = neomorphinone + formaldehyde + succinate + CO2. It carries out the reaction (S)-canadine + S-adenosyl-L-methionine = (S)-cis-N-methylcanadine + S-adenosyl-L-homocysteine. The enzyme catalyses thebaine + 2-oxoglutarate + O2 = 6-O-demethylthebaine + formaldehyde + succinate + CO2 + H(+). Its pathway is alkaloid biosynthesis; morphine biosynthesis. Moderate substrate inhibition. Not inhibited in vitro by acylcyclohexanediones. Its function is as follows. Non-heme dioxygenase involved in biosynthesis of morphinan-type benzylisoquinoline and opiate alkaloids natural products. Mediates the conversion of thebaine to neopinone. Also catalyzes, with lower efficiency, the 6-O-demethylation of oripavine to neomorphinone, which is converted spontaneously to morphinone. Supports dealkylation reactions such as O,O-demethylenation in the metabolism of protopine, benzo[c]phenanthridine, and rhoeadine alkaloids; cleaves a methylenedioxy bridge leaving two hydroxyl groups. Catalyzes the O-demethylation of methylenedioxy bridges on protopine alkaloids such as allocryptopine. No activity with (S)-reticuline, salutaridine, papaverine, (S)-corytuberine, (S)-scoulerine, pavine, noscapine or codeine. This is Thebaine 6-O-demethylase from Papaver somniferum (Opium poppy).